The following is a 146-amino-acid chain: UPF0178 protein CTC_02403 (146 aa).

Belongs to the UPF0178 family.

This is UPF0178 protein CTC_02403 from Clostridium tetani (strain Massachusetts / E88).